The primary structure comprises 517 residues: Amidophosphoribosyltransferase (517 aa).

Residue Met-1 is modified to N-acetylmethionine. A propeptide spanning residues 1–11 is cleaved from the precursor; that stretch reads MELEELGIREE. The Nucleophile role is filled by Cys-12. Residues 12 to 261 form the Glutamine amidotransferase type-2 domain; the sequence is CGVFGCIASG…PGEIVEISRH (250 aa). Cys-280 contacts [4Fe-4S] cluster. Residues Ser-327, Asp-389, and Asp-390 each coordinate Mg(2+). Residues Cys-426, Cys-503, and Cys-506 each coordinate [4Fe-4S] cluster.

This sequence in the C-terminal section; belongs to the purine/pyrimidine phosphoribosyltransferase family. In terms of assembly, homotetramer. It depends on Mg(2+) as a cofactor. The cofactor is [4Fe-4S] cluster. As to expression, ubiquitously expressed.

It carries out the reaction 5-phospho-beta-D-ribosylamine + L-glutamate + diphosphate = 5-phospho-alpha-D-ribose 1-diphosphate + L-glutamine + H2O. The protein operates within purine metabolism; IMP biosynthesis via de novo pathway; N(1)-(5-phospho-D-ribosyl)glycinamide from 5-phospho-alpha-D-ribose 1-diphosphate: step 1/2. Catalyzes the formation of phosphoribosylamine from phosphoribosylpyrophosphate (PRPP) and glutamine. The sequence is that of Amidophosphoribosyltransferase (PPAT) from Homo sapiens (Human).